The primary structure comprises 103 residues: MYAVFQSGGKQHRVAEGHTVRLEKLEVATGATVEFDQVLLIADGETVHVGAPLVAGGKVVAEVVGHGRGEKVTIIKFRRRKHHDKKMGHRQWFTEVKITAINA.

The protein belongs to the bacterial ribosomal protein bL21 family. Part of the 50S ribosomal subunit. Contacts protein L20.

Its function is as follows. This protein binds to 23S rRNA in the presence of protein L20. This is Large ribosomal subunit protein bL21 from Shewanella denitrificans (strain OS217 / ATCC BAA-1090 / DSM 15013).